The chain runs to 197 residues: Large ribosomal subunit protein bL25 (197 aa).

This sequence belongs to the bacterial ribosomal protein bL25 family. CTC subfamily. Part of the 50S ribosomal subunit; part of the 5S rRNA/L5/L18/L25 subcomplex. Contacts the 5S rRNA. Binds to the 5S rRNA independently of L5 and L18.

In terms of biological role, this is one of the proteins that binds to the 5S RNA in the ribosome where it forms part of the central protuberance. The chain is Large ribosomal subunit protein bL25 from Citrifermentans bemidjiense (strain ATCC BAA-1014 / DSM 16622 / JCM 12645 / Bem) (Geobacter bemidjiensis).